Here is a 54-residue protein sequence, read N- to C-terminus: QSTNDLIKACGRELVRLWVEICGSVRWGQSALRMTLSEKCCQVGCIRKDIARLC.

At Gln-1 the chain carries Pyrrolidone carboxylic acid. 3 disulfide bridges follow: Cys-10–Cys-41, Cys-22–Cys-54, and Cys-40–Cys-45.

It belongs to the insulin family. In terms of assembly, heterodimer of a B chain and an A chain linked by two disulfide bonds.

It is found in the secreted. In terms of biological role, relaxin is an ovarian hormone that acts with estrogen to produce dilatation of the birth canal in many mammals. The chain is Relaxin from Balaenoptera acutorostrata (Common minke whale).